We begin with the raw amino-acid sequence, 45 residues long: Large ribosomal subunit protein bL34 (45 aa).

This sequence belongs to the bacterial ribosomal protein bL34 family.

This is Large ribosomal subunit protein bL34 from Salinispora tropica (strain ATCC BAA-916 / DSM 44818 / JCM 13857 / NBRC 105044 / CNB-440).